The sequence spans 445 residues: Phosphoglucosamine mutase (445 aa).

Ser-102 acts as the Phosphoserine intermediate in catalysis. Residues Ser-102, Asp-241, Asp-243, and Asp-245 each coordinate Mg(2+). Ser-102 is subject to Phosphoserine.

It belongs to the phosphohexose mutase family. Requires Mg(2+) as cofactor. Activated by phosphorylation.

It carries out the reaction alpha-D-glucosamine 1-phosphate = D-glucosamine 6-phosphate. Functionally, catalyzes the conversion of glucosamine-6-phosphate to glucosamine-1-phosphate. The polypeptide is Phosphoglucosamine mutase (Escherichia coli (strain 55989 / EAEC)).